A 211-amino-acid polypeptide reads, in one-letter code: Endonuclease V (211 aa).

Positions 31 and 95 each coordinate Mg(2+). The interval 182-211 is disordered; sequence IYEVKNTPSPNRSRKKRGNRGKDNNNSQGN.

It belongs to the endonuclease V family. It depends on Mg(2+) as a cofactor.

It localises to the cytoplasm. It carries out the reaction Endonucleolytic cleavage at apurinic or apyrimidinic sites to products with a 5'-phosphate.. DNA repair enzyme involved in the repair of deaminated bases. Selectively cleaves double-stranded DNA at the second phosphodiester bond 3' to a deoxyinosine leaving behind the intact lesion on the nicked DNA. The polypeptide is Endonuclease V (Pyrococcus horikoshii (strain ATCC 700860 / DSM 12428 / JCM 9974 / NBRC 100139 / OT-3)).